The primary structure comprises 123 residues: Small ribosomal subunit protein uS12 (123 aa).

The residue at position 89 (Asp-89) is a 3-methylthioaspartic acid.

Belongs to the universal ribosomal protein uS12 family. Part of the 30S ribosomal subunit. Contacts proteins S8 and S17. May interact with IF1 in the 30S initiation complex.

In terms of biological role, with S4 and S5 plays an important role in translational accuracy. Interacts with and stabilizes bases of the 16S rRNA that are involved in tRNA selection in the A site and with the mRNA backbone. Located at the interface of the 30S and 50S subunits, it traverses the body of the 30S subunit contacting proteins on the other side and probably holding the rRNA structure together. The combined cluster of proteins S8, S12 and S17 appears to hold together the shoulder and platform of the 30S subunit. This Rhizobium etli (strain ATCC 51251 / DSM 11541 / JCM 21823 / NBRC 15573 / CFN 42) protein is Small ribosomal subunit protein uS12.